A 78-amino-acid polypeptide reads, in one-letter code: Acyl carrier protein (78 aa).

Positions 1–76 constitute a Carrier domain; that stretch reads MSLEERVKEI…DVINYLKEKV (76 aa). Ser36 is subject to O-(pantetheine 4'-phosphoryl)serine.

The protein belongs to the acyl carrier protein (ACP) family. In terms of processing, 4'-phosphopantetheine is transferred from CoA to a specific serine of apo-ACP by AcpS. This modification is essential for activity because fatty acids are bound in thioester linkage to the sulfhydryl of the prosthetic group.

Its subcellular location is the cytoplasm. It functions in the pathway lipid metabolism; fatty acid biosynthesis. Its function is as follows. Carrier of the growing fatty acid chain in fatty acid biosynthesis. This is Acyl carrier protein from Aquifex aeolicus (strain VF5).